Consider the following 708-residue polypeptide: Protein SUPPRESSOR OF MAX2 1A (708 aa).

Residues 248-283 (QMASKPQEKAASPPGSPVRTDLVLGPKQTETTPEKT) form a disordered region. The EAR signature appears at 537-541 (FDLNE).

Belongs to the ClpA/ClpB family.

Its function is as follows. Probable component of a transcriptional corepressor complex that acts downstream of MAX2 to negatively regulate karrikins/strigolactone responses. Involved in the (-)-germacrene D signaling pathway influencing plant fitness and occurring in the stigma in a KAI2IA-dependent manner. The protein is Protein SUPPRESSOR OF MAX2 1A of Petunia hybrida (Petunia).